Consider the following 102-residue polypeptide: Small ribosomal subunit protein uS10 (102 aa).

This sequence belongs to the universal ribosomal protein uS10 family. In terms of assembly, part of the 30S ribosomal subunit.

Involved in the binding of tRNA to the ribosomes. This chain is Small ribosomal subunit protein uS10, found in Allorhizobium ampelinum (strain ATCC BAA-846 / DSM 112012 / S4) (Agrobacterium vitis (strain S4)).